Here is a 124-residue protein sequence, read N- to C-terminus: MRITKVEGSLGLPCQSYQDDNEAEAERMDFEQLMHQALPIGENNPPAALNKNVVFTQRYRVSGGYLDGVECEVCESGGLIQLRINVPHHEIYRSMKALKQWLESQLLHMGYIISLEIFYVKNSE.

This is Secretion system apparatus protein SsaP (ssaP) from Salmonella typhi.